The following is a 1486-amino-acid chain: Chromosome partition protein MukB (1486 aa).

Residue 34 to 41 (GGNGAGKS) coordinates ATP. Coiled coils occupy residues 326 to 418 (LEAD…QYNQ), 444 to 480 (LETFQAKELEATEKMLSLEQKMSMAQTAHSQFEQAYQ), and 509 to 603 (RHLA…RAPV). The interval 666 to 783 (PGGSEDQRLN…EVPLFGRAAR (118 aa)) is flexible hinge. Coiled-coil stretches lie at residues 835–923 (EAEI…AKLE), 977–1115 (EMLS…TAKA), and 1209–1266 (VEAI…QNVS).

It belongs to the SMC family. MukB subfamily. In terms of assembly, homodimerization via its hinge domain. Binds to DNA via its C-terminal region. Interacts, and probably forms a ternary complex, with MukE and MukF via its C-terminal region. The complex formation is stimulated by calcium or magnesium. Interacts with tubulin-related protein FtsZ.

Its subcellular location is the cytoplasm. It is found in the nucleoid. Its function is as follows. Plays a central role in chromosome condensation, segregation and cell cycle progression. Functions as a homodimer, which is essential for chromosome partition. Involved in negative DNA supercoiling in vivo, and by this means organize and compact chromosomes. May achieve or facilitate chromosome segregation by condensation DNA from both sides of a centrally located replisome during cell division. The protein is Chromosome partition protein MukB of Escherichia coli O17:K52:H18 (strain UMN026 / ExPEC).